A 200-amino-acid polypeptide reads, in one-letter code: COMM domain-containing protein 7 (200 aa).

A COMM domain is found at 133-200; that stretch reads QLIDMEWKFG…RVRTSMECFC (68 aa).

Belongs to the COMM domain-containing protein 7 family. As to quaternary structure, component of the commander complex consisting of the CCC subcomplex and the retriever subcomplex. Component of the CCC (COMMD/CCDC22/CCDC93) subcomplex consisting of COMMD1, COMMD2, COMMD3, COMMD4, COMMD5, COMMD6, COMMD7, COMMD8, COMMD9, COMMD10, CCDC22 and CCDC93; within the complex forms a heterodimer with COMMD9. Interacts with RELA. Interacts with CCDC22, CCDC93, SCNN1B, CUL7. Widely expressed with highest expression in lung.

It localises to the cytoplasmic vesicle. In terms of biological role, scaffold protein in the commander complex that is essential for endosomal recycling of transmembrane cargos; the commander complex is composed of the CCC subcomplex and the retriever subcomplex. May modulate activity of cullin-RING E3 ubiquitin ligase (CRL) complexes. Associates with the NF-kappa-B complex and suppresses its transcriptional activity. This is COMM domain-containing protein 7 (COMMD7) from Homo sapiens (Human).